The following is a 381-amino-acid chain: Cytochrome b (381 aa).

4 consecutive transmembrane segments (helical) span residues 34-54, 78-99, 114-134, and 179-199; these read FGSHLGLCLIIQILTGLFLAM, WLIRNIHANGASLFFICVYLHI, WNIGVILLFLLMATAFVGYVL, and FFAFHFLLPFLILALTVIHLL. Residues H84 and H98 each coordinate heme b. Heme b-binding residues include H183 and H197. Position 202 (H202) interacts with a ubiquinone. The next 4 helical transmembrane spans lie at 227–247, 289–309, 321–341, and 348–368; these read YKDLLGFFVMIFFLAALALFM, LGGVLALLFSIFILMLVPLLH, MTQILFWFLVANSIILTWIGG, and FIMVGQIASISYFSLFLIIMP.

This sequence belongs to the cytochrome b family. In terms of assembly, the cytochrome bc1 complex contains 3 respiratory subunits (MT-CYB, CYC1 and UQCRFS1), 2 core proteins (UQCRC1 and UQCRC2) and probably 6 low-molecular weight proteins. The cofactor is heme b.

Its subcellular location is the mitochondrion inner membrane. Component of the ubiquinol-cytochrome c reductase complex (complex III or cytochrome b-c1 complex) that is part of the mitochondrial respiratory chain. The b-c1 complex mediates electron transfer from ubiquinol to cytochrome c. Contributes to the generation of a proton gradient across the mitochondrial membrane that is then used for ATP synthesis. In Carcharhinus porosus (Smalltail shark), this protein is Cytochrome b (mt-cyb).